Here is a 345-residue protein sequence, read N- to C-terminus: Phosphoribosylformylglycinamidine cyclo-ligase (345 aa).

The protein belongs to the AIR synthase family.

It localises to the cytoplasm. It carries out the reaction 2-formamido-N(1)-(5-O-phospho-beta-D-ribosyl)acetamidine + ATP = 5-amino-1-(5-phospho-beta-D-ribosyl)imidazole + ADP + phosphate + H(+). Its pathway is purine metabolism; IMP biosynthesis via de novo pathway; 5-amino-1-(5-phospho-D-ribosyl)imidazole from N(2)-formyl-N(1)-(5-phospho-D-ribosyl)glycinamide: step 2/2. In Limosilactobacillus fermentum (strain NBRC 3956 / LMG 18251) (Lactobacillus fermentum), this protein is Phosphoribosylformylglycinamidine cyclo-ligase.